Reading from the N-terminus, the 269-residue chain is 4-hydroxy-tetrahydrodipicolinate reductase (269 aa).

NAD(+)-binding positions include Gly-10–Met-15, Glu-36, Gly-99–Thr-101, and Ala-123–Phe-126. Residue His-156 is the Proton donor/acceptor of the active site. Residue His-157 coordinates (S)-2,3,4,5-tetrahydrodipicolinate. Residue Lys-160 is the Proton donor of the active site. Gly-166–Thr-167 contacts (S)-2,3,4,5-tetrahydrodipicolinate.

This sequence belongs to the DapB family.

Its subcellular location is the cytoplasm. The enzyme catalyses (S)-2,3,4,5-tetrahydrodipicolinate + NAD(+) + H2O = (2S,4S)-4-hydroxy-2,3,4,5-tetrahydrodipicolinate + NADH + H(+). The catalysed reaction is (S)-2,3,4,5-tetrahydrodipicolinate + NADP(+) + H2O = (2S,4S)-4-hydroxy-2,3,4,5-tetrahydrodipicolinate + NADPH + H(+). Its pathway is amino-acid biosynthesis; L-lysine biosynthesis via DAP pathway; (S)-tetrahydrodipicolinate from L-aspartate: step 4/4. Its function is as follows. Catalyzes the conversion of 4-hydroxy-tetrahydrodipicolinate (HTPA) to tetrahydrodipicolinate. This chain is 4-hydroxy-tetrahydrodipicolinate reductase, found in Neisseria meningitidis serogroup A / serotype 4A (strain DSM 15465 / Z2491).